Consider the following 510-residue polypeptide: Cytochrome P450 94B1 (510 aa).

Residues 3–23 (MLNAIILILFPIIGFVLIFSF) form a helical membrane-spanning segment. Heme is bound at residue Cys450.

It belongs to the cytochrome P450 family. The cofactor is heme.

It localises to the membrane. It carries out the reaction a jasmonyl-L-amino acid + reduced [NADPH--hemoprotein reductase] + O2 = a 12-hydroxyjasmonyl-L-alpha-amino acid + oxidized [NADPH--hemoprotein reductase] + H2O + H(+). Functionally, hydroxylase involved in the oxidation of the plant hormone jasmonoyl-L-isoleucine (JA-Ile), a bioactive phytohormone of the jasmonate-mediated signaling pathway. Converts JA-Ile to 12-hydroxy-JA-Ile. This chain is Cytochrome P450 94B1, found in Arabidopsis thaliana (Mouse-ear cress).